The following is a 180-amino-acid chain: Ribulose bisphosphate carboxylase small subunit, chloroplastic 4 (180 aa).

A chloroplast-targeting transit peptide spans 1-56; it reads MASSIVSSAAVATRGNGAQASMVAPFTGLKSTASFPVSRKQNLDITSIASNGGRVS.

It belongs to the RuBisCO small chain family. Heterohexadecamer of 8 large and 8 small subunits. In terms of assembly, (Microbial infection) Binds to tobamovirus movement protein; this interaction seems required for viral systemic movement.

Its subcellular location is the plastid. It localises to the chloroplast. It is found in the cell junction. The protein resides in the plasmodesma. In terms of biological role, ruBisCO catalyzes two reactions: the carboxylation of D-ribulose 1,5-bisphosphate, the primary event in carbon dioxide fixation, as well as the oxidative fragmentation of the pentose substrate. Both reactions occur simultaneously and in competition at the same active site. Although the small subunit is not catalytic it is essential for maximal activity. Involved in antiviral defenses. The sequence is that of Ribulose bisphosphate carboxylase small subunit, chloroplastic 4 from Solanum lycopersicum (Tomato).